Here is a 213-residue protein sequence, read N- to C-terminus: Ergothioneine transport ATP-binding protein EgtV (213 aa).

An ABC transporter domain is found at 5–212; the sequence is VTIENVSFNY…ATKTLEIKAL (208 aa). 37 to 44 contacts ATP; the sequence is GESGSGKS.

This sequence belongs to the ABC transporter superfamily. The complex is composed of two ATP-binding proteins (EgtV) and two transmembrane proteins (EgtU).

Its subcellular location is the cell inner membrane. It carries out the reaction ergothioneine(out) + ATP + H2O = ergothioneine(in) + ADP + phosphate + H(+). Functionally, part of the ABC transporter complex EgtUV involved in the uptake of ergothioneine (EGT), a natural low-molecular weight (LMW) thiol antioxidant which protects H.pylori against bleach stress. Responsible for energy coupling to the transport system. This Helicobacter pylori (strain G27) protein is Ergothioneine transport ATP-binding protein EgtV.